A 404-amino-acid polypeptide reads, in one-letter code: Tryptophan synthase beta chain (404 aa).

At lysine 94 the chain carries N6-(pyridoxal phosphate)lysine.

It belongs to the TrpB family. In terms of assembly, tetramer of two alpha and two beta chains. Pyridoxal 5'-phosphate is required as a cofactor.

It carries out the reaction (1S,2R)-1-C-(indol-3-yl)glycerol 3-phosphate + L-serine = D-glyceraldehyde 3-phosphate + L-tryptophan + H2O. The protein operates within amino-acid biosynthesis; L-tryptophan biosynthesis; L-tryptophan from chorismate: step 5/5. Functionally, the beta subunit is responsible for the synthesis of L-tryptophan from indole and L-serine. In Staphylococcus aureus (strain JH1), this protein is Tryptophan synthase beta chain.